Reading from the N-terminus, the 230-residue chain is MTAIAPVITVDGPSGAGKGTLCKALAESLNWRLLDSGAIYRVLALAALHHQVDISTEEALVPLAAHLDVRFVSQNGQLQVILEGEDVSNEIRTETVGNTASQAAAFPRVREALLRRQRAFREAPGLIADGRDMGTIVFPDAPVKIFLDASSQERAHRRMLQLQERGFNVNFERLLAEIQERDNRDRNRSVAPLVPAADALVLDSTSMSIEQVIEQALAYAQRILALPLKK.

Residue 12 to 20 (GPSGAGKGT) participates in ATP binding.

This sequence belongs to the cytidylate kinase family. Type 1 subfamily.

It is found in the cytoplasm. It carries out the reaction CMP + ATP = CDP + ADP. The catalysed reaction is dCMP + ATP = dCDP + ADP. This chain is Cytidylate kinase, found in Yersinia pseudotuberculosis serotype O:1b (strain IP 31758).